A 153-amino-acid polypeptide reads, in one-letter code: ORM1-like protein 1 (153 aa).

The Cytoplasmic portion of the chain corresponds to 1–26 (MNVGVAHSEVNPNTRVMNSRGMWLTY). The next 2 membrane-spanning stretches (helical) occupy residues 27–46 (ALGVGMLHIVLLSIPFFSVP) and 47–67 (VAWTLTNVIHNLGMYVFLHAV). Residues 68 to 100 (KGTPFETPDQGKARLLTHWEQLDYGVQFTSSRK) are Cytoplasmic-facing. A helical transmembrane segment spans residues 101–121 (FLTISPIILYFLASFYTKYDP). Topologically, residues 122-123 (TH) are extracellular. The helical transmembrane segment at 124–144 (FFINTASLLSVLIPKLPQLHG) threads the bilayer. The Cytoplasmic portion of the chain corresponds to 145–153 (VRIFGINKY).

Belongs to the ORM family. In terms of assembly, ceramide-sensitive subunit of the serine palmitoyltransferase (SPT) complex, which is also composed of SPTLC1, SPTLC2/3 and SPTSSA/B.

It localises to the endoplasmic reticulum membrane. In terms of biological role, plays an essential role in the homeostatic regulation of sphingolipid de novo biosynthesis by modulating the activity of the serine palmitoyltransferase (SPT) in response to ceramide levels. When complexed to SPT, the binding of ceramides to its N-terminus stabilizes a conformation that block SPT substrate entry, hence preventing SPT catalytic activity. Through this mechanism, maintains ceramide levels at sufficient concentrations for the production of complex sphingolipids, but which prevents the accumulation of ceramides to levels that trigger apoptosis. This chain is ORM1-like protein 1 (ormdl1), found in Xenopus laevis (African clawed frog).